The chain runs to 423 residues: Lipid droplet-regulating VLDL assembly factor AUP1 (423 aa).

At 1–19 (METRGIEQMFDFQRLPNDR) the chain is on the cytoplasmic side. Residues 20 to 40 (FILLLLLLYAPVGFCLMLLRI) lie within the membrane without spanning it. Topologically, residues 41–423 (FIGVHVFLVS…KHGLNKEDDL (383 aa)) are cytoplasmic. The region spanning 304-346 (RIARLAQQVKEVLPDVPVSVITRDLLQTNCVDTTITNLLERTD) is the CUE domain. The tract at residues 355-392 (TMPSGPGKAAASSTPSAMVSSPNLKPAAKSFGRSPIDR) is disordered. Over residues 365 to 377 (ASSTPSAMVSSPN) the composition is skewed to polar residues.

It belongs to the AUP1 family.

It localises to the endoplasmic reticulum membrane. The protein resides in the lipid droplet. Its function is as follows. Plays a role in the translocation of terminally misfolded proteins from the endoplasmic reticulum lumen to the cytoplasm and their degradation by the proteasome. Plays a role in lipid droplet formation. Induces lipid droplet clustering. This Danio rerio (Zebrafish) protein is Lipid droplet-regulating VLDL assembly factor AUP1.